Reading from the N-terminus, the 472-residue chain is Interferon-induced protein with tetratricopeptide repeats 2 (472 aa).

S2 is modified (N-acetylserine). TPR repeat units lie at residues 51 to 89 (ATMCNILAYVKHCRGLNEAALQCLGEAEGFIQQQHPDQV), 90 to 135 (EIRS…RIEN), 136 to 171 (PALDCEEGWARLKCTKNQNERVKVCFQKALEKDPKN), 172 to 208 (PEFTSGWAIAFYRLDDWPARNYCIDSLEQAIQLSPDN), 244 to 277 (IDTLLRAARFYCKVYDTDRAIQLLRKALEKLPNN), 278 to 333 (AYVH…MLEY), 334 to 364 (SCSFLADLYIIAKKYDEADYYFQKELSKDLP), 365 to 403 (PGPKQLLHLRYGNFQFFQMKRQDKAIYHYMEGVKIKKKT), and 404 to 445 (IPQK…GGQQ). Positions 441–472 (GGGQQADKDSERGVDSANQVPSASLDEDGAEY) are disordered.

Belongs to the IFIT family. Domain-swapped homodimer. Component of an interferon-dependent multiprotein complex, at least composed of IFIT1, IFIT2 and IFIT3. Interacts with IFIT1 and IFIT3. Interacts with STING1/MITA and disrupts its interaction with MAVS or TBK1. Interacts with EIF3C.

Its subcellular location is the cytoplasm. It is found in the endoplasmic reticulum. Its function is as follows. IFN-induced antiviral protein which inhibits expression of viral messenger RNAs lacking 2'-O-methylation of the 5' cap. The ribose 2'-O-methylation would provide a molecular signature to distinguish between self and non-self mRNAs by the host during viral infection. Viruses evolved several ways to evade this restriction system such as encoding their own 2'-O-methylase for their mRNAs or by stealing host cap containing the 2'-O-methylation (cap snatching mechanism). Binds AU-rich viral RNAs, with or without 5' triphosphorylation, RNA-binding is required for antiviral activity. Can promote apoptosis. This Mus musculus (Mouse) protein is Interferon-induced protein with tetratricopeptide repeats 2 (Ifit2).